We begin with the raw amino-acid sequence, 306 residues long: UDP-3-O-acyl-N-acetylglucosamine deacetylase (306 aa).

H79, H238, and D242 together coordinate Zn(2+). H265 functions as the Proton donor in the catalytic mechanism.

The protein belongs to the LpxC family. Zn(2+) serves as cofactor.

It carries out the reaction a UDP-3-O-[(3R)-3-hydroxyacyl]-N-acetyl-alpha-D-glucosamine + H2O = a UDP-3-O-[(3R)-3-hydroxyacyl]-alpha-D-glucosamine + acetate. Its pathway is glycolipid biosynthesis; lipid IV(A) biosynthesis; lipid IV(A) from (3R)-3-hydroxytetradecanoyl-[acyl-carrier-protein] and UDP-N-acetyl-alpha-D-glucosamine: step 2/6. Functionally, catalyzes the hydrolysis of UDP-3-O-myristoyl-N-acetylglucosamine to form UDP-3-O-myristoylglucosamine and acetate, the committed step in lipid A biosynthesis. This Shewanella sp. (strain ANA-3) protein is UDP-3-O-acyl-N-acetylglucosamine deacetylase.